The sequence spans 77 residues: U8-lycotoxin-Ls1e (77 aa).

Positions 1 to 20 (MKLIIFTGLVLFAIVSLIEA) are cleaved as a signal peptide. Positions 21 to 26 (QAENEK) are excised as a propeptide.

This sequence belongs to the neurotoxin 19 (CSTX) family. 08 (U8-Lctx) subfamily. Contains 4 disulfide bonds. In terms of tissue distribution, expressed by the venom gland.

Its subcellular location is the secreted. The chain is U8-lycotoxin-Ls1e from Lycosa singoriensis (Wolf spider).